We begin with the raw amino-acid sequence, 160 residues long: Cytochrome b6-f complex subunit 4 (160 aa).

3 helical membrane passes run isoleucine 36–isoleucine 56, leucine 95–glutamate 115, and alanine 131–isoleucine 151.

Belongs to the cytochrome b family. PetD subfamily. In terms of assembly, the 4 large subunits of the cytochrome b6-f complex are cytochrome b6, subunit IV (17 kDa polypeptide, PetD), cytochrome f and the Rieske protein, while the 4 small subunits are PetG, PetL, PetM and PetN. The complex functions as a dimer.

The protein localises to the cellular thylakoid membrane. In terms of biological role, component of the cytochrome b6-f complex, which mediates electron transfer between photosystem II (PSII) and photosystem I (PSI), cyclic electron flow around PSI, and state transitions. The protein is Cytochrome b6-f complex subunit 4 of Picosynechococcus sp. (strain ATCC 27264 / PCC 7002 / PR-6) (Agmenellum quadruplicatum).